An 841-amino-acid polypeptide reads, in one-letter code: DNA mismatch repair protein MutS (841 aa).

ATP is bound at residue 600–607 (GPNMAGKS).

The protein belongs to the DNA mismatch repair MutS family.

Functionally, this protein is involved in the repair of mismatches in DNA. It is possible that it carries out the mismatch recognition step. This protein has a weak ATPase activity. The chain is DNA mismatch repair protein MutS from Carboxydothermus hydrogenoformans (strain ATCC BAA-161 / DSM 6008 / Z-2901).